The chain runs to 548 residues: ETS domain-containing transcription factor ERF (548 aa).

Threonine 3 and threonine 7 each carry phosphothreonine. 2 positions are modified to phosphoserine: serine 20 and serine 24. A DNA-binding region (ETS) is located at residues isoleucine 27–asparagine 107. Disordered stretches follow at residues glutamine 130–serine 169, glycine 184–leucine 225, and serine 280–serine 304. A phosphoserine mark is found at serine 185 and serine 190. Over residues serine 289–serine 301 the composition is skewed to gly residues. Serine 327 is subject to Phosphoserine. The interval proline 342 to methionine 478 is disordered. Residues cysteine 348–proline 361 show a composition bias toward pro residues. Composition is skewed to low complexity over residues serine 362–serine 373 and lysine 394–glycine 403. A phosphoserine mark is found at serine 431 and serine 435. The span at serine 431–glycine 451 shows a compositional bias: acidic residues. Position 441 is a phosphothreonine (threonine 441). The residue at position 444 (serine 444) is a Phosphoserine. Glycyl lysine isopeptide (Lys-Gly) (interchain with G-Cter in SUMO2) cross-links involve residues lysine 465, lysine 481, and lysine 512. Residues cysteine 492–serine 548 form a disordered region. At threonine 526 the chain carries Phosphothreonine; by MAPK1. A phosphoserine mark is found at serine 531, serine 532, and serine 548. The span at serine 532–leucine 541 shows a compositional bias: polar residues.

Belongs to the ETS family. In terms of processing, phosphorylated by multiple kinases including MAPK1/ERK2 at THR-526. Phosphorylation regulates the activity of ERF. In terms of tissue distribution, highest levels in testis, ovary, pancreas, and heart.

It is found in the nucleus. Functionally, potent transcriptional repressor that binds to the H1 element of the Ets2 promoter. May regulate other genes involved in cellular proliferation. Required for extraembryonic ectoderm differentiation, ectoplacental cone cavity closure, and chorioallantoic attachment. May be important for regulating trophoblast stem cell differentiation. This Homo sapiens (Human) protein is ETS domain-containing transcription factor ERF (ERF).